A 93-amino-acid chain; its full sequence is YcgL domain-containing protein swp_2294 (93 aa).

The YcgL domain occupies 1 to 85; sequence MICAVYKSLR…PVVNLLEQHK (85 aa).

This Shewanella piezotolerans (strain WP3 / JCM 13877) protein is YcgL domain-containing protein swp_2294.